The sequence spans 256 residues: Hydroxyacylglutathione hydrolase (256 aa).

Positions 54, 56, 58, 59, 113, 136, and 174 each coordinate Zn(2+).

Belongs to the metallo-beta-lactamase superfamily. Glyoxalase II family. Monomer. Requires Zn(2+) as cofactor.

The catalysed reaction is an S-(2-hydroxyacyl)glutathione + H2O = a 2-hydroxy carboxylate + glutathione + H(+). Its pathway is secondary metabolite metabolism; methylglyoxal degradation; (R)-lactate from methylglyoxal: step 2/2. Thiolesterase that catalyzes the hydrolysis of S-D-lactoyl-glutathione to form glutathione and D-lactic acid. The chain is Hydroxyacylglutathione hydrolase from Cyanothece sp. (strain PCC 7425 / ATCC 29141).